A 613-amino-acid polypeptide reads, in one-letter code: Forkhead box protein O (613 aa).

Disordered stretches follow at residues 39–90, 182–205, 217–269, and 317–360; these read RARS…KNSS, KSVR…RAKK, GLND…RLSP, and QGFS…PASG. Position 44 is a phosphothreonine; by PKB/AKT1 (Thr44). The segment covering 63-80 has biased composition (polar residues); the sequence is TKASNQQLAPGDSQQAIQ. Position 75 is a phosphoserine (Ser75). A compositionally biased stretch (low complexity) spans 81-90; the sequence is NANAAKKNSS. Positions 95–201 form a DNA-binding region, fork-head; the sequence is WGNLSYADLI…ETSRYEKRRG (107 aa). At Ser190 the chain carries Phosphoserine; by PKB/AKT1. Composition is skewed to polar residues over residues 221–230 and 256–265; these read ATPSPSSSVS and RASSNASSCG. Ser259 bears the Phosphoserine; by PKB/AKT1 mark. Ser262, Ser263, and Ser268 each carry phosphoserine. Positions 327–336 are enriched in pro residues; that stretch reads SQPPPPPYQP. Over residues 337 to 353 the composition is skewed to low complexity; that stretch reads PQHQQAQQQQQQQSPYA.

Interacts with melt.

It is found in the cytoplasm. Its subcellular location is the nucleus. In terms of biological role, transcription factor involved in the regulation of the insulin signaling pathway. Consistently activates both the downstream target Thor\d4EBP and the feedback control target InR. Involved in negative regulation of the cell cycle, modulating cell growth and proliferation. In response to cellular stresses, such as nutrient deprivation or increased levels of reactive oxygen species, foxo is activated and inhibits growth through the action of target genes such as Thor. Foxo activated in the adult fat body can regulate lifespan in adults; an insulin peptide itself may function as one secondary messenger of insulin-regulated aging. Also regulates Lip4, homolog of human acid lipases, thereby acting as a key modulator of lipid metabolism by insulin signaling and integrates insulin responses to glucose and lipid homeostasis. The chain is Forkhead box protein O from Drosophila melanogaster (Fruit fly).